The sequence spans 226 residues: AN1-type zinc finger protein 3 homolog (226 aa).

The A20-type zinc finger occupies 12-44 (PSLPPRCPCGFWGSSKTMNLCSKCFADFQKKQP). Residues Cys-18, Cys-20, Cys-32, and Cys-35 each contribute to the Zn(2+) site. The disordered stretch occupies residues 42–149 (KQPDEDTAPS…DRPDNSSRSK (108 aa)). Composition is skewed to polar residues over residues 49 to 59 (APSTSSSQSDL), 67 to 92 (DNGN…NVDS), and 105 to 114 (AHVSLTTPSK). A compositionally biased stretch (basic and acidic residues) spans 134 to 146 (RLLDSGDRPDNSS). The AN1-type zinc finger occupies 150–199 (QKSRRRCFRCQIKLELVQQELGSCRCGYVFCMLHRLPEQHDCTFDHMGRG). 8 residues coordinate Zn(2+): Cys-156, Cys-159, Cys-173, Cys-175, Cys-180, His-183, His-189, and Cys-191.

This Xenopus laevis (African clawed frog) protein is AN1-type zinc finger protein 3 homolog (zfand3).